A 282-amino-acid polypeptide reads, in one-letter code: Undecaprenyl-diphosphatase (282 aa).

7 helical membrane passes run 40-60, 85-105, 115-135, 153-173, 193-213, 230-250, and 258-278; these read GAAF…MYFW, ARMG…GLLF, SLYW…LAEW, IGWK…IPGS, AARF…IFQL, LAAA…FLLS, and TIFI…LSTG.

The protein belongs to the UppP family.

The protein resides in the cell inner membrane. The catalysed reaction is di-trans,octa-cis-undecaprenyl diphosphate + H2O = di-trans,octa-cis-undecaprenyl phosphate + phosphate + H(+). Functionally, catalyzes the dephosphorylation of undecaprenyl diphosphate (UPP). Confers resistance to bacitracin. This is Undecaprenyl-diphosphatase from Chlorobium phaeovibrioides (strain DSM 265 / 1930) (Prosthecochloris vibrioformis (strain DSM 265)).